The sequence spans 311 residues: ADP-L-glycero-D-manno-heptose-6-epimerase (311 aa).

Residues 10 to 11, 31 to 32, Lys38, Lys53, 75 to 79, and Asn92 contribute to the NADP(+) site; these read FI, DD, and EGACS. Residue Tyr139 is the Proton acceptor of the active site. Lys143 contacts NADP(+). Asn174 is a binding site for substrate. NADP(+) contacts are provided by Val175 and Lys183. The active-site Proton acceptor is the Lys183. Substrate-binding positions include Ser185, His192, 206 to 209, Arg212, and Tyr275; that span reads FEGE.

Belongs to the NAD(P)-dependent epimerase/dehydratase family. HldD subfamily. Homopentamer. Requires NADP(+) as cofactor.

It catalyses the reaction ADP-D-glycero-beta-D-manno-heptose = ADP-L-glycero-beta-D-manno-heptose. Its pathway is nucleotide-sugar biosynthesis; ADP-L-glycero-beta-D-manno-heptose biosynthesis; ADP-L-glycero-beta-D-manno-heptose from D-glycero-beta-D-manno-heptose 7-phosphate: step 4/4. Functionally, catalyzes the interconversion between ADP-D-glycero-beta-D-manno-heptose and ADP-L-glycero-beta-D-manno-heptose via an epimerization at carbon 6 of the heptose. In Psychromonas ingrahamii (strain DSM 17664 / CCUG 51855 / 37), this protein is ADP-L-glycero-D-manno-heptose-6-epimerase.